Consider the following 894-residue polypeptide: Translation initiation factor IF-2 (894 aa).

Residues 25–304 (ADAGMNKASS…KPTSMQHGFD (280 aa)) form a disordered region. Basic and acidic residues-rich tracts occupy residues 33–44 (SSDHVSDEEKQK), 52–62 (EHGDKSGESEP), 101–174 (STIE…KEMN), 184–239 (AKKE…ENSD), and 247–263 (YAREAEDAADRKEEGGA). Over residues 283–293 (RGGKGRNKGKL) the composition is skewed to basic residues. A tr-type G domain is found at 393 to 562 (PRAPVVTIMG…LLQSEVLELT (170 aa)). The tract at residues 402–409 (GHVDHGKT) is G1. Position 402-409 (402-409 (GHVDHGKT)) interacts with GTP. The G2 stretch occupies residues 427-431 (GITQH). Residues 448–451 (DTPG) form a G3 region. GTP-binding positions include 448–452 (DTPGH) and 502–505 (NKID). Residues 502–505 (NKID) form a G4 region. The tract at residues 538–540 (SAK) is G5.

This sequence belongs to the TRAFAC class translation factor GTPase superfamily. Classic translation factor GTPase family. IF-2 subfamily.

The protein resides in the cytoplasm. Functionally, one of the essential components for the initiation of protein synthesis. Protects formylmethionyl-tRNA from spontaneous hydrolysis and promotes its binding to the 30S ribosomal subunits. Also involved in the hydrolysis of GTP during the formation of the 70S ribosomal complex. The polypeptide is Translation initiation factor IF-2 (Vibrio campbellii (strain ATCC BAA-1116)).